Consider the following 286-residue polypeptide: 3-methyl-2-oxobutanoate hydroxymethyltransferase (286 aa).

2 residues coordinate Mg(2+): D67 and D106. 3-methyl-2-oxobutanoate is bound by residues 67–68, D106, and K136; that span reads DS. A Mg(2+)-binding site is contributed by E138. The active-site Proton acceptor is E204.

It belongs to the PanB family. In terms of assembly, homodecamer; pentamer of dimers. Mg(2+) serves as cofactor.

It localises to the cytoplasm. The catalysed reaction is 3-methyl-2-oxobutanoate + (6R)-5,10-methylene-5,6,7,8-tetrahydrofolate + H2O = 2-dehydropantoate + (6S)-5,6,7,8-tetrahydrofolate. The protein operates within cofactor biosynthesis; (R)-pantothenate biosynthesis; (R)-pantoate from 3-methyl-2-oxobutanoate: step 1/2. Catalyzes the reversible reaction in which hydroxymethyl group from 5,10-methylenetetrahydrofolate is transferred onto alpha-ketoisovalerate to form ketopantoate. This Mycobacterium leprae (strain TN) protein is 3-methyl-2-oxobutanoate hydroxymethyltransferase.